Here is a 356-residue protein sequence, read N- to C-terminus: Phospho-N-acetylmuramoyl-pentapeptide-transferase (356 aa).

10 consecutive transmembrane segments (helical) span residues 27–47, 73–93, 97–117, 138–158, 165–185, 195–215, 232–252, 258–278, 284–304, and 333–353; these read ATLM…INML, TMGG…WMDL, FVWA…LDDL, FLVA…WLYV, AIPL…GAGN, GLAI…AYLA, AGEL…FLWF, AVFM…AIAV, IVLA…IIQV, and KVVI…LATL.

It belongs to the glycosyltransferase 4 family. MraY subfamily. It depends on Mg(2+) as a cofactor.

It localises to the cell inner membrane. The catalysed reaction is UDP-N-acetyl-alpha-D-muramoyl-L-alanyl-gamma-D-glutamyl-meso-2,6-diaminopimeloyl-D-alanyl-D-alanine + di-trans,octa-cis-undecaprenyl phosphate = di-trans,octa-cis-undecaprenyl diphospho-N-acetyl-alpha-D-muramoyl-L-alanyl-D-glutamyl-meso-2,6-diaminopimeloyl-D-alanyl-D-alanine + UMP. The protein operates within cell wall biogenesis; peptidoglycan biosynthesis. Its function is as follows. Catalyzes the initial step of the lipid cycle reactions in the biosynthesis of the cell wall peptidoglycan: transfers peptidoglycan precursor phospho-MurNAc-pentapeptide from UDP-MurNAc-pentapeptide onto the lipid carrier undecaprenyl phosphate, yielding undecaprenyl-pyrophosphoryl-MurNAc-pentapeptide, known as lipid I. The chain is Phospho-N-acetylmuramoyl-pentapeptide-transferase from Erythrobacter litoralis (strain HTCC2594).